A 163-amino-acid chain; its full sequence is Cytosolic iron-sulfur assembly component 2B (163 aa).

This sequence belongs to the MIP18 family.

It localises to the nucleus. It is found in the cytoplasm. The protein resides in the cytoskeleton. Its subcellular location is the spindle. Component of the cytosolic iron-sulfur (Fe/S) protein assembly machinery. Required for the maturation of extramitochondrial Fe/S proteins. May play a role in chromosome segregation through establishment of sister chromatid cohesion. This chain is Cytosolic iron-sulfur assembly component 2B, found in Dictyostelium discoideum (Social amoeba).